Reading from the N-terminus, the 141-residue chain is Nucleoside diphosphate kinase (141 aa).

ATP is bound by residues lysine 11, phenylalanine 59, arginine 87, threonine 93, arginine 104, and asparagine 114. Histidine 117 serves as the catalytic Pros-phosphohistidine intermediate.

Belongs to the NDK family. As to quaternary structure, homotetramer. Mg(2+) serves as cofactor.

It localises to the cytoplasm. The catalysed reaction is a 2'-deoxyribonucleoside 5'-diphosphate + ATP = a 2'-deoxyribonucleoside 5'-triphosphate + ADP. It carries out the reaction a ribonucleoside 5'-diphosphate + ATP = a ribonucleoside 5'-triphosphate + ADP. Its function is as follows. Major role in the synthesis of nucleoside triphosphates other than ATP. The ATP gamma phosphate is transferred to the NDP beta phosphate via a ping-pong mechanism, using a phosphorylated active-site intermediate. The protein is Nucleoside diphosphate kinase of Pseudomonas fluorescens (strain ATCC BAA-477 / NRRL B-23932 / Pf-5).